The sequence spans 269 residues: dITP/XTP pyrophosphatase (269 aa).

22–27 (SNNAHK) contacts substrate. Residue Asp-82 is the Proton acceptor of the active site. Asp-82 is a binding site for Mg(2+). Residues Ser-83, 165 to 168 (FGYD), Lys-188, and 193 to 194 (HR) each bind substrate.

It belongs to the HAM1 NTPase family. As to quaternary structure, homodimer. Mg(2+) serves as cofactor.

The catalysed reaction is XTP + H2O = XMP + diphosphate + H(+). The enzyme catalyses dITP + H2O = dIMP + diphosphate + H(+). It catalyses the reaction ITP + H2O = IMP + diphosphate + H(+). Functionally, pyrophosphatase that catalyzes the hydrolysis of nucleoside triphosphates to their monophosphate derivatives, with a high preference for the non-canonical purine nucleotides XTP (xanthosine triphosphate), dITP (deoxyinosine triphosphate) and ITP. Seems to function as a house-cleaning enzyme that removes non-canonical purine nucleotides from the nucleotide pool, thus preventing their incorporation into DNA/RNA and avoiding chromosomal lesions. This Treponema pallidum (strain Nichols) protein is dITP/XTP pyrophosphatase.